Here is a 130-residue protein sequence, read N- to C-terminus: Small ribosomal subunit protein uS11c (130 aa).

This sequence belongs to the universal ribosomal protein uS11 family. As to quaternary structure, part of the 30S ribosomal subunit.

The protein resides in the plastid. It localises to the chloroplast. The polypeptide is Small ribosomal subunit protein uS11c (Chara vulgaris (Common stonewort)).